Here is a 117-residue protein sequence, read N- to C-terminus: Large ribosomal subunit protein bL20 (117 aa).

The protein belongs to the bacterial ribosomal protein bL20 family.

Its function is as follows. Binds directly to 23S ribosomal RNA and is necessary for the in vitro assembly process of the 50S ribosomal subunit. It is not involved in the protein synthesizing functions of that subunit. The protein is Large ribosomal subunit protein bL20 of Glaesserella parasuis serovar 5 (strain SH0165) (Haemophilus parasuis).